The chain runs to 589 residues: Aspartate--tRNA(Asp/Asn) ligase (589 aa).

Glu-176 contacts L-aspartate. Positions 200 to 203 are aspartate; that stretch reads QLFK. Arg-222 provides a ligand contact to L-aspartate. Residues 222-224 and Gln-231 contribute to the ATP site; that span reads RDE. His-450 contacts L-aspartate. Glu-484 contacts ATP. Residue Arg-491 coordinates L-aspartate. Position 536–539 (536–539) interacts with ATP; sequence GLDR.

This sequence belongs to the class-II aminoacyl-tRNA synthetase family. Type 1 subfamily. Homodimer.

The protein localises to the cytoplasm. The enzyme catalyses tRNA(Asx) + L-aspartate + ATP = L-aspartyl-tRNA(Asx) + AMP + diphosphate. Aspartyl-tRNA synthetase with relaxed tRNA specificity since it is able to aspartylate not only its cognate tRNA(Asp) but also tRNA(Asn). Reaction proceeds in two steps: L-aspartate is first activated by ATP to form Asp-AMP and then transferred to the acceptor end of tRNA(Asp/Asn). The polypeptide is Aspartate--tRNA(Asp/Asn) ligase (Bacillus cytotoxicus (strain DSM 22905 / CIP 110041 / 391-98 / NVH 391-98)).